We begin with the raw amino-acid sequence, 309 residues long: DnaJ protein ERDJ7 (309 aa).

The first 36 residues, 1 to 36, serve as a signal peptide directing secretion; that stretch reads MSQVGSAGEGSNSMAAAPPPRLLLLVVLLLVPVSNA. Topologically, residues 37 to 130 are lumenal; sequence IYCEEDDCYD…YRAYYGHKTD (94 aa). The J domain maps to 43 to 107; that stretch reads DCYDLLGVKQ…STRGQYDYAI (65 aa). Residue Asn55 is glycosylated (N-linked (GlcNAc...) asparagine). The chain crosses the membrane as a helical span at residues 131 to 151; that stretch reads PRAVLIGLLLIISAFQYLNQF. Topologically, residues 152-219 are cytoplasmic; the sequence is GRYSKAIETV…GVEKPSLWRL (68 aa). A helical transmembrane segment spans residues 220 to 242; sequence YGVQFILLPYSIGKVLSWKFCWF. Residues 243 to 309 are Lumenal-facing; that stretch reads WRYRIKKLPY…EMRKESKRRR (67 aa).

The protein resides in the endoplasmic reticulum membrane. Functionally, may play a role in protein folding in the endoplasmic reticulum. The sequence is that of DnaJ protein ERDJ7 from Oryza sativa subsp. japonica (Rice).